A 544-amino-acid chain; its full sequence is CTP synthase (544 aa).

The interval 1 to 265 (MTKFIFVTGG…DDIICEHLDL (265 aa)) is amidoligase domain. Ser-13 contacts CTP. Position 13 (Ser-13) interacts with UTP. ATP is bound by residues 14–19 (SLGKGI) and Asp-71. Mg(2+) is bound by residues Asp-71 and Glu-139. CTP contacts are provided by residues 146-148 (DIE), 186-191 (KTKPTQ), and Lys-222. UTP contacts are provided by residues 186 to 191 (KTKPTQ) and Lys-222. One can recognise a Glutamine amidotransferase type-1 domain in the interval 290 to 542 (NIAMVGKYVD…VEAALAYQAD (253 aa)). Gly-351 is an L-glutamine binding site. Cys-378 (nucleophile; for glutamine hydrolysis) is an active-site residue. L-glutamine is bound by residues 379–382 (LGMQ), Glu-402, and Arg-469. Catalysis depends on residues His-515 and Glu-517.

Belongs to the CTP synthase family. As to quaternary structure, homotetramer.

The catalysed reaction is UTP + L-glutamine + ATP + H2O = CTP + L-glutamate + ADP + phosphate + 2 H(+). The enzyme catalyses L-glutamine + H2O = L-glutamate + NH4(+). It carries out the reaction UTP + NH4(+) + ATP = CTP + ADP + phosphate + 2 H(+). Its pathway is pyrimidine metabolism; CTP biosynthesis via de novo pathway; CTP from UDP: step 2/2. Allosterically activated by GTP, when glutamine is the substrate; GTP has no effect on the reaction when ammonia is the substrate. The allosteric effector GTP functions by stabilizing the protein conformation that binds the tetrahedral intermediate(s) formed during glutamine hydrolysis. Inhibited by the product CTP, via allosteric rather than competitive inhibition. Functionally, catalyzes the ATP-dependent amination of UTP to CTP with either L-glutamine or ammonia as the source of nitrogen. Regulates intracellular CTP levels through interactions with the four ribonucleotide triphosphates. In Laribacter hongkongensis (strain HLHK9), this protein is CTP synthase.